Consider the following 295-residue polypeptide: Nicotinate-nucleotide pyrophosphorylase [carboxylating] (295 aa).

Residues Arg107, 142 to 144, Arg166, Lys176, Glu206, Asp227, and 256 to 258 each bind substrate; these read TRK and SGG.

Belongs to the NadC/ModD family. Hexamer formed by 3 homodimers.

The protein localises to the cytoplasm. The protein resides in the nucleus. The enzyme catalyses nicotinate beta-D-ribonucleotide + CO2 + diphosphate = quinolinate + 5-phospho-alpha-D-ribose 1-diphosphate + 2 H(+). It participates in cofactor biosynthesis; NAD(+) biosynthesis; nicotinate D-ribonucleotide from quinolinate: step 1/1. Functionally, involved in the catabolism of quinolinic acid (QA). In Saccharomyces cerevisiae (strain ATCC 204508 / S288c) (Baker's yeast), this protein is Nicotinate-nucleotide pyrophosphorylase [carboxylating] (BNA6).